The sequence spans 363 residues: Glutamate 5-kinase (363 aa).

Residue Lys-6 coordinates ATP. Positions 46, 133, and 145 each coordinate substrate. ATP contacts are provided by residues Thr-165–Asp-166 and Thr-207–Lys-213. One can recognise a PUA domain in the interval Thr-271–Thr-349.

Belongs to the glutamate 5-kinase family.

The protein resides in the cytoplasm. The enzyme catalyses L-glutamate + ATP = L-glutamyl 5-phosphate + ADP. The protein operates within amino-acid biosynthesis; L-proline biosynthesis; L-glutamate 5-semialdehyde from L-glutamate: step 1/2. Catalyzes the transfer of a phosphate group to glutamate to form L-glutamate 5-phosphate. The protein is Glutamate 5-kinase of Deinococcus geothermalis (strain DSM 11300 / CIP 105573 / AG-3a).